The primary structure comprises 181 residues: TATA-box-binding protein (181 aa).

2 consecutive repeat copies span residues 7-83 (IVNV…IKEL) and 98-173 (VQNM…LTTL).

It belongs to the TBP family.

Its function is as follows. General factor that plays a role in the activation of archaeal genes transcribed by RNA polymerase. Binds specifically to the TATA box promoter element which lies close to the position of transcription initiation. In Methanococcus maripaludis (strain C7 / ATCC BAA-1331), this protein is TATA-box-binding protein.